Reading from the N-terminus, the 231-residue chain is Ribose-5-phosphate isomerase A (231 aa).

Residues 32–35 (TGST), 85–88 (DGAD), and 98–101 (KGGG) contribute to the substrate site. Catalysis depends on Glu107, which acts as the Proton acceptor. Lys125 is a substrate binding site.

Belongs to the ribose 5-phosphate isomerase family. In terms of assembly, homodimer.

It carries out the reaction aldehydo-D-ribose 5-phosphate = D-ribulose 5-phosphate. It participates in carbohydrate degradation; pentose phosphate pathway; D-ribose 5-phosphate from D-ribulose 5-phosphate (non-oxidative stage): step 1/1. Functionally, catalyzes the reversible conversion of ribose-5-phosphate to ribulose 5-phosphate. The sequence is that of Ribose-5-phosphate isomerase A from Paraburkholderia xenovorans (strain LB400).